Here is a 181-residue protein sequence, read N- to C-terminus: Thioredoxin-like protein CITRX2, chloroplastic (181 aa).

A chloroplast-targeting transit peptide spans 1–70; sequence MQAATLSFQP…PDVATGKYVR (70 aa). Residues 72-181 enclose the Thioredoxin domain; that stretch reads DYLVKKVSAK…MMRDIINNDL (110 aa). Catalysis depends on nucleophile residues C104 and C107. C104 and C107 form a disulfide bridge.

It belongs to the thioredoxin family. Plant CITRX-type subfamily.

The protein resides in the plastid. Its subcellular location is the chloroplast. In terms of biological role, probable thiol-disulfide oxidoreductase that may play a role in proper chloroplast development. The protein is Thioredoxin-like protein CITRX2, chloroplastic of Nicotiana benthamiana.